Here is an 85-residue protein sequence, read N- to C-terminus: Large ribosomal subunit protein bL27 (85 aa).

Positions 1–21 are disordered; that stretch reads MAHKKGASSSRNGRDSNAQRL. Residues 7-19 show a composition bias toward polar residues; sequence ASSSRNGRDSNAQ.

Belongs to the bacterial ribosomal protein bL27 family.

The protein is Large ribosomal subunit protein bL27 of Beutenbergia cavernae (strain ATCC BAA-8 / DSM 12333 / CCUG 43141 / JCM 11478 / NBRC 16432 / NCIMB 13614 / HKI 0122).